We begin with the raw amino-acid sequence, 335 residues long: MKMIGFEKPFKLEEGNLFKVYEQRKPTPENDDILVKVNSISVNPVDTKQRQMEVTQAPRVLGFDAIGTVEAIGPNVTLFSPGDVVFYAGSPNRQGSNATYQLVSEAIVAKAPHNISANEAVSLPLTGITAYETFFDTFKISHNPSENIGKSVLIINGAGGVGSIATQIAKRYGLTVITTASRQETTEWCEKMGADIVLNHKEDLVRQFKEKEIPLVDYIFCTYNTDLYYNTMIELIKPLGHITTIVAFNEDQDLNALKLKSITFTHEFMFARPIHRTPDMIKQHEYLEDITKNIESGHYQPTTTQVFEGLSPENLYQAHLLLEKQSMIGKLVINI.

Belongs to the zinc-containing alcohol dehydrogenase family. Quinone oxidoreductase subfamily.

This chain is Zinc-type alcohol dehydrogenase-like protein SAR2277, found in Staphylococcus aureus (strain MRSA252).